Consider the following 456-residue polypeptide: UPF0210 protein Dde_3704 (456 aa).

The protein belongs to the UPF0210 family. In terms of assembly, homodimer.

This chain is UPF0210 protein Dde_3704, found in Oleidesulfovibrio alaskensis (strain ATCC BAA-1058 / DSM 17464 / G20) (Desulfovibrio alaskensis).